The sequence spans 902 residues: 3'-5' exonuclease DinG (902 aa).

The Exonuclease domain occupies 8–161 (VVDLETTGNQ…DEDATTTAKL (154 aa)). The 256-residue stretch at 241–496 (KNVTQSLNLT…KAVDKLEQQR (256 aa)) folds into the Helicase ATP-binding domain. 276–283 (APLGSGKS) contacts ATP. Residues 448–451 (DEAH) carry the DEAH box motif. Residues 714–883 (YIVEYITVTQ…HFKQRKGNIK (170 aa)) enclose the Helicase C-terminal domain.

Belongs to the helicase family. DinG subfamily. Type 2 sub-subfamily.

Functionally, 3'-5' exonuclease. This Staphylococcus epidermidis (strain ATCC 35984 / DSM 28319 / BCRC 17069 / CCUG 31568 / BM 3577 / RP62A) protein is 3'-5' exonuclease DinG.